The chain runs to 411 residues: MVKQNDKIILAYSGGLDTSVAISWLKDKGYDVVACGIDVGEGKDMDAIKEKALKLGAVSSYMIDAKQEFAEEYALIALQGHTLYEGEYPLVSALSRPLIAKKLVTLAKQEHAVAIAHGCTGKGNDQVRFEVAIHALAPDIKIEAPVRDWHWSREEEIDYAKEHNIPVPINLDSPYSIDENLWGRANECGILEDPWQGAPADAFDRTKALADTPDTPTTLEITFEAGVPVALDGESLNLADLIIKLDQIAGEHGIGRIDHIENRLVGIKSREVYEAPAATVLLKAHKDLEDLTFERELAHFKPIIEQKLADTIYNGLWFSPLMEAMVAFLKQTQQVVNGVVRVQLFKGNVITEGRKSPNSLYDTNLATYTSADSFDQQAAVGFIKLWGLPTQVNAQVQAKAQAEAKTDKAHA.

ATP is bound at residue 11–19 (AYSGGLDTS). Residue Tyr-88 participates in L-citrulline binding. An ATP-binding site is contributed by Gly-118. 3 residues coordinate L-aspartate: Thr-120, Asn-124, and Asp-125. L-citrulline is bound at residue Asn-124. The L-citrulline site is built by Arg-128, Ser-176, Glu-261, and Tyr-273.

Belongs to the argininosuccinate synthase family. Type 1 subfamily. As to quaternary structure, homotetramer.

The protein resides in the cytoplasm. The enzyme catalyses L-citrulline + L-aspartate + ATP = 2-(N(omega)-L-arginino)succinate + AMP + diphosphate + H(+). It functions in the pathway amino-acid biosynthesis; L-arginine biosynthesis; L-arginine from L-ornithine and carbamoyl phosphate: step 2/3. The polypeptide is Argininosuccinate synthase (Lactiplantibacillus plantarum (strain ATCC BAA-793 / NCIMB 8826 / WCFS1) (Lactobacillus plantarum)).